We begin with the raw amino-acid sequence, 190 residues long: dTTP/UTP pyrophosphatase (190 aa).

The Proton acceptor role is filled by Asp71.

This sequence belongs to the Maf family. YhdE subfamily. A divalent metal cation serves as cofactor.

Its subcellular location is the cytoplasm. The catalysed reaction is dTTP + H2O = dTMP + diphosphate + H(+). It catalyses the reaction UTP + H2O = UMP + diphosphate + H(+). Its function is as follows. Nucleoside triphosphate pyrophosphatase that hydrolyzes dTTP and UTP. May have a dual role in cell division arrest and in preventing the incorporation of modified nucleotides into cellular nucleic acids. This Xanthomonas campestris pv. campestris (strain ATCC 33913 / DSM 3586 / NCPPB 528 / LMG 568 / P 25) protein is dTTP/UTP pyrophosphatase.